The sequence spans 736 residues: 1,4-alpha-glucan branching enzyme GlgB (736 aa).

The active-site Nucleophile is aspartate 417. The active-site Proton donor is the glutamate 470.

The protein belongs to the glycosyl hydrolase 13 family. GlgB subfamily. Monomer.

The enzyme catalyses Transfers a segment of a (1-&gt;4)-alpha-D-glucan chain to a primary hydroxy group in a similar glucan chain.. It participates in glycan biosynthesis; glycogen biosynthesis. In terms of biological role, catalyzes the formation of the alpha-1,6-glucosidic linkages in glycogen by scission of a 1,4-alpha-linked oligosaccharide from growing alpha-1,4-glucan chains and the subsequent attachment of the oligosaccharide to the alpha-1,6 position. The protein is 1,4-alpha-glucan branching enzyme GlgB of Pseudomonas putida (strain ATCC 47054 / DSM 6125 / CFBP 8728 / NCIMB 11950 / KT2440).